The sequence spans 163 residues: Regulatory protein RecX (163 aa).

Positions 1–21 (MSDAEDIPTGRKRRPREQTPV) are disordered.

The protein belongs to the RecX family.

The protein localises to the cytoplasm. Functionally, modulates RecA activity. The chain is Regulatory protein RecX from Stenotrophomonas maltophilia (strain K279a).